The sequence spans 70 residues: Large ribosomal subunit protein eL38 (70 aa).

Belongs to the eukaryotic ribosomal protein eL38 family.

This Julodis onopordi (Jewel beetle) protein is Large ribosomal subunit protein eL38 (RpL38).